A 310-amino-acid polypeptide reads, in one-letter code: ADP-L-glycero-D-manno-heptose-6-epimerase (310 aa).

Residues 10 to 11 (FI), 31 to 32 (DN), Lys38, Lys53, 75 to 79 (EGACS), and Asn92 contribute to the NADP(+) site. Tyr140 acts as the Proton acceptor in catalysis. Residue Lys144 coordinates NADP(+). Asn169 is a substrate binding site. The NADP(+) site is built by Val170 and Lys178. Lys178 serves as the catalytic Proton acceptor. Residues Ser180, His187, 201–204 (FEGS), Arg209, and Tyr272 contribute to the substrate site.

Belongs to the NAD(P)-dependent epimerase/dehydratase family. HldD subfamily. Homopentamer. It depends on NADP(+) as a cofactor.

It carries out the reaction ADP-D-glycero-beta-D-manno-heptose = ADP-L-glycero-beta-D-manno-heptose. It functions in the pathway nucleotide-sugar biosynthesis; ADP-L-glycero-beta-D-manno-heptose biosynthesis; ADP-L-glycero-beta-D-manno-heptose from D-glycero-beta-D-manno-heptose 7-phosphate: step 4/4. In terms of biological role, catalyzes the interconversion between ADP-D-glycero-beta-D-manno-heptose and ADP-L-glycero-beta-D-manno-heptose via an epimerization at carbon 6 of the heptose. This Salmonella arizonae (strain ATCC BAA-731 / CDC346-86 / RSK2980) protein is ADP-L-glycero-D-manno-heptose-6-epimerase.